Here is a 755-residue protein sequence, read N- to C-terminus: Cartilage oligomeric matrix protein (755 aa).

The signal sequence occupies residues 1-19 (MGPTACVLVLALAILRATG). A COMP N-terminal region spans residues 21–84 (GQIPLGGDLA…PARTPGLSVR (64 aa)). The region spanning 85 to 124 (PVPLCAPGSCFPGVVCSETATGARCGPCPPGYTGNGSHCT) is the EGF-like 1 domain. 21 disulfides stabilise this stretch: Cys-89–Cys-100, Cys-94–Cys-109, Cys-112–Cys-123, Cys-129–Cys-140, Cys-134–Cys-149, Cys-152–Cys-176, Cys-182–Cys-195, Cys-189–Cys-204, Cys-207–Cys-219, Cys-227–Cys-241, Cys-235–Cys-251, Cys-253–Cys-264, Cys-280–Cys-285, Cys-290–Cys-310, Cys-326–Cys-346, Cys-349–Cys-369, Cys-385–Cys-405, Cys-408–Cys-428, Cys-446–Cys-466, Cys-482–Cys-502, and Cys-518–Cys-739. Asn-119 is a glycosylation site (N-linked (GlcNAc...) asparagine). An EGF-like 2; calcium-binding domain is found at 125 to 177 (DVNECNAHPCFPRVRCINTSPGFHCEACPPGFSGPTHEGVGLTFAKSNKQVCT). The EGF-like 3; calcium-binding domain maps to 178–220 (DINECETGQHNCVPNSVCVNTRGSFQCGPCQPGFVGDQTSGCQ). One can recognise an EGF-like 4 domain in the interval 223–265 (GQHFCPDGSPSPCHEKANCVLERDGSRSCVCAVGWAGNGLLCG). 8 TSP type-3 repeats span residues 266–298 (RDTD…NSGQ), 299–334 (EDVD…NPDQ), 335–357 (RNSD…NDDQ), 358–393 (KDTD…NFDQ), 394–416 (SDSD…NPDQ), 417–454 (RDVD…NSAQ), 455–490 (QDSD…NPGQ), and 491–526 (EDND…EVTL). Disordered stretches follow at residues 296-341 (SGQE…DSDK) and 353-501 (KNDD…VGDA). Basic and acidic residues-rich tracts occupy residues 332–341 (PDQRNSDSDK) and 353–368 (KNDD…RGDA). At Ser-394 the chain carries Phosphoserine. Composition is skewed to basic and acidic residues over residues 412 to 424 (DNPD…HDFV) and 456 to 465 (DSDHDGKGDA). The tract at residues 525–755 (TLTDFRAFQT…DYESHRLQRV (231 aa)) is mediates cell survival and induction of the IAP family of survival proteins. The TSP C-terminal domain occupies 530 to 744 (RAFQTVVLDP…LRYRCNDTIP (215 aa)). Asn-740 carries N-linked (GlcNAc...) asparagine glycosylation.

It belongs to the thrombospondin family. As to quaternary structure, pentamer; disulfide-linked. Exists in a more compact conformation in the presence of calcium and shows a more extended conformation in the absence of calcium. Interacts with ITGB3, ITGA5 and FN1. Binding to FN1 requires the presence of divalent cations (Ca(2+), Mg(2+) or Mn(2+)). The greatest amount of binding is seen in the presence of Mn(2+). Interacts with MATN1, MATN3, MATN4 and ACAN. Binds heparin, heparan sulfate and chondroitin sulfate. EDTA dimishes significantly its binding to ACAN and abolishes its binding to MATN3, MATN4 and chondroitin sulfate. Interacts with collagen I, II and IX, and interaction with these collagens is dependent on the presence of zinc ions. Interacts with ADAMTS12. Interacts with ITGA7. The cofactor is Ca(2+). Proteolytically cleaved by metalloproteases ADAMTS4 and ADAMTS1 with ADAMTS4 showing more potent activity. In terms of tissue distribution, expressed in cartilage, including nasal, knee epiphyseal and rib tissues. Abundantly expressed in chondrocyte and tendon extracellular matrix (at protein level).

The protein resides in the secreted. Its subcellular location is the extracellular space. The protein localises to the extracellular matrix. Plays a role in the structural integrity of cartilage via its interaction with other extracellular matrix proteins such as the collagens and fibronectin. Can mediate the interaction of chondrocytes with the cartilage extracellular matrix through interaction with cell surface integrin receptors. Could play a role in the pathogenesis of osteoarthritis. Potent suppressor of apoptosis in both primary chondrocytes and transformed cells. Suppresses apoptosis by blocking the activation of caspase-3 and by inducing the IAP family of survival proteins (BIRC3, BIRC2, BIRC5 and XIAP). Essential for maintaining a vascular smooth muscle cells (VSMCs) contractile/differentiated phenotype under physiological and pathological stimuli. Maintains this phenotype of VSMCs by interacting with ITGA7. This chain is Cartilage oligomeric matrix protein, found in Mus musculus (Mouse).